Consider the following 461-residue polypeptide: Na(+)/H(+) antiporter NhaA (461 aa).

The tract at residues 1 to 23 is disordered; that stretch reads MILSTQRLGRFMSPAPTPAPDAK. 12 helical membrane-spanning segments follow: residues 48-68, 89-109, 127-147, 157-177, 186-206, 211-231, 236-256, 257-277, 305-325, 339-359, 374-394, and 408-428; these read VGGA…NSPV, LSLG…LVGL, IVPV…YAAV, GWAI…AIIG, IFLL…IAFF, IQAA…FLAQ, FFGA…IVTW, ALVH…GFAV, ISAG…AVGG, IGII…TTWI, WIDV…SLLV, and HAKV…TVVL.

Belongs to the NhaA Na(+)/H(+) (TC 2.A.33) antiporter family.

The protein localises to the cell membrane. The catalysed reaction is Na(+)(in) + 2 H(+)(out) = Na(+)(out) + 2 H(+)(in). Na(+)/H(+) antiporter that extrudes sodium in exchange for external protons. The chain is Na(+)/H(+) antiporter NhaA from Arthrobacter sp. (strain FB24).